An 833-amino-acid chain; its full sequence is Glycerol-3-phosphate acyltransferase (833 aa).

Residues 310–315 (HRSHID) carry the HXXXXD motif motif.

It belongs to the GPAT/DAPAT family.

The protein resides in the cell inner membrane. The catalysed reaction is sn-glycerol 3-phosphate + an acyl-CoA = a 1-acyl-sn-glycero-3-phosphate + CoA. It functions in the pathway phospholipid metabolism; CDP-diacylglycerol biosynthesis; CDP-diacylglycerol from sn-glycerol 3-phosphate: step 1/3. This chain is Glycerol-3-phosphate acyltransferase, found in Pseudomonas syringae pv. tomato (strain ATCC BAA-871 / DC3000).